Here is an 83-residue protein sequence, read N- to C-terminus: Gas vesicle protein G (83 aa).

Belongs to the gas vesicle GvpG family. In terms of assembly, gvpF to GvpM interact with each other in vitro, and may form multi-subunit complex(es).

It localises to the gas vesicle. Functionally, proteins GvpF to GvpM might be involved in nucleating gas vesicle formation. A minor component of the gas vesicle. Gas vesicles are hollow, gas filled proteinaceous nanostructures found in some microorganisms. They allow positioning of halobacteria at the optimal depth for growth in the poorly aerated, shallow brine pools of their habitat. Its function is as follows. Expression of a 9.5 kb mc-vac DNA fragment containing 2 divergently transcribed regions (gvpD-gvpE-gvpF-gvpG-gvpH-gvpI-gvpJ-gvpK-gvpL-gvpM and gvpA-gvpC-gvpN-gvpO) allows H.volcanii to produce gas vesicles. The polypeptide is Gas vesicle protein G (Haloferax mediterranei (strain ATCC 33500 / DSM 1411 / JCM 8866 / NBRC 14739 / NCIMB 2177 / R-4) (Halobacterium mediterranei)).